A 563-amino-acid polypeptide reads, in one-letter code: Pyruvate decarboxylase isozyme 2 (563 aa).

The pyruvate site is built by D28, H115, Y157, and R224. Residues T390 and 413-415 (GSI) each bind thiamine diphosphate. Position 444 (D444) interacts with Mg(2+). Thiamine diphosphate contacts are provided by residues 445-446 (GS) and 471-476 (NNGYTI). Positions 471 and 473 each coordinate Mg(2+). A pyruvate-binding site is contributed by E477.

Belongs to the TPP enzyme family. In terms of assembly, homotetramer. Mg(2+) is required as a cofactor. Thiamine diphosphate serves as cofactor.

Its subcellular location is the cytoplasm. It localises to the nucleus. It catalyses the reaction pyruvate + H(+) = acetaldehyde + CO2. The catalysed reaction is 3-methyl-2-oxobutanoate + H(+) = 2-methylpropanal + CO2. The enzyme catalyses (S)-3-methyl-2-oxopentanoate + H(+) = 2-methylbutanal + CO2. It carries out the reaction indole-3-pyruvate + H(+) = indole-3-acetaldehyde + CO2. It catalyses the reaction 3-phenylpyruvate + H(+) = 2-phenylacetaldehyde + CO2. The catalysed reaction is 2-oxobutanoate + H(+) = propanal + CO2. The enzyme catalyses 2-oxopentanoate + H(+) = butanal + CO2. It carries out the reaction 2 acetaldehyde = acetoin. It catalyses the reaction acetaldehyde + pyruvate + H(+) = acetoin + CO2. It participates in fermentation; ethanol fermentation. Its pathway is amino-acid degradation; Ehrlich pathway. With respect to regulation, allosterically activated by its substrate, pyruvate. Second most abundant of three pyruvate decarboxylases (PDC1, PDC5, PDC6) implicated in the nonoxidative conversion of pyruvate to acetaldehyde and carbon dioxide during alcoholic fermentation. Most of the produced acetaldehyde is subsequently reduced to ethanol, but some is required for cytosolic acetyl-CoA production for biosynthetic pathways. The enzyme is also one of five 2-oxo acid decarboxylases (PDC1, PDC5, PDC6, ARO10, and THI3) able to decarboxylate more complex 2-oxo acids (alpha-keto-acids) than pyruvate, which seem mainly involved in amino acid catabolism. Here the enzyme catalyzes the decarboxylation of amino acids, which, in a first step, have been transaminated to the corresponding 2-oxo acids. In a third step, the resulting aldehydes are reduced to alcohols, collectively referred to as fusel oils or alcohols. Its preferred substrates are the transaminated amino acids derived from threonine (2-oxobutanoate), norvaline (2-oxopentanoate), valine (3-methyl-2-oxobutanoate, also alpha-keto-isovalerate), isoleucine ((3S)-3-methyl-2-oxopentanoate, also alpha-keto-beta-methylvalerate), phenylalanine (phenylpyruvate), and tryptophan (3-(indol-3-yl)pyruvate), whereas transaminated leucine is no substrate. In a side-reaction the carbanionic intermediate (or active aldehyde) generated by decarboxylation or by activation of an aldehyde can react with an aldehyde via condensation (or carboligation) yielding a 2-hydroxy ketone, collectively called acyloins. This chain is Pyruvate decarboxylase isozyme 2 (PDC5), found in Saccharomyces cerevisiae (strain ATCC 204508 / S288c) (Baker's yeast).